The chain runs to 797 residues: Inulosucrase (797 aa).

An N-terminal signal peptide occupies residues 1-36 (MLENKNHKKISLSGKSLLMGTLSTAAIVLSASTANA). Residues 54–64 (ASSVNNENNKQ) are compositionally biased toward polar residues. The interval 54-176 (ASSVNNENNK…SVKPAENATK (123 aa)) is disordered. Basic and acidic residues-rich tracts occupy residues 65-75 (VTEKDSADKST) and 82-95 (ANTK…ETTE). Positions 130-139 (DQKTTNAATT) are enriched in low complexity. A compositionally biased stretch (basic and acidic residues) spans 140–167 (DTKKDDVKQVEKKDSVDKTNAEENKDSS). W271 contacts substrate. Catalysis depends on D272, which acts as the Nucleophile. Ca(2+) is bound at residue N317. Position 340 (S340) interacts with substrate. D419 contributes to the Ca(2+) binding site. 424-425 (RD) is a substrate binding site. The Ca(2+) site is built by Q450, W487, N489, and D521. Substrate contacts are provided by residues 522-524 (EIE) and R542. E524 serves as the catalytic Proton donor/acceptor. Positions 660, 662, and 667 each coordinate Ca(2+). The segment at 708-766 (QPVTPIPNVPTTPETPTTPDKPEVPTTPEVPTTPETPTPEAPKNPVKKTSQSKLPKAGD) is disordered. The segment covering 718-740 (TTPETPTTPDKPEVPTTPEVPTT) has biased composition (low complexity). An LPXTG sorting signal motif is present at residues 761 to 765 (LPKAG). At A764 the chain carries Pentaglycyl murein peptidoglycan amidated alanine. A propeptide spans 765–797 (GDKNSFAAVVLGAVSSILGAVGLTGVSKRKRNN) (removed by sortase).

The protein belongs to the glycosyl hydrolase 68 family. The cofactor is Ca(2+).

It localises to the secreted. The protein resides in the cell wall. The catalysed reaction is [(2-&gt;1)-beta-D-fructosyl](n) + sucrose = [(2-&gt;1)-beta-D-fructosyl](n+1) + D-glucose. Its function is as follows. Fructosyltransferase that catalyzes the polymerization of the fructose moiety of sucrose to produce inulin polymer and inulin oligosaccharides such as 1-kestose and nystose. This chain is Inulosucrase, found in Lactobacillus johnsonii (strain CNCM I-12250 / La1 / NCC 533).